A 185-amino-acid polypeptide reads, in one-letter code: Large ribosomal subunit protein uL5 (185 aa).

It belongs to the universal ribosomal protein uL5 family. Part of the 50S ribosomal subunit; part of the 5S rRNA/L5/L18/L25 subcomplex. Contacts the 5S rRNA and the P site tRNA. Forms a bridge to the 30S subunit in the 70S ribosome.

This is one of the proteins that bind and probably mediate the attachment of the 5S RNA into the large ribosomal subunit, where it forms part of the central protuberance. In the 70S ribosome it contacts protein S13 of the 30S subunit (bridge B1b), connecting the 2 subunits; this bridge is implicated in subunit movement. Contacts the P site tRNA; the 5S rRNA and some of its associated proteins might help stabilize positioning of ribosome-bound tRNAs. This chain is Large ribosomal subunit protein uL5, found in Bradyrhizobium diazoefficiens (strain JCM 10833 / BCRC 13528 / IAM 13628 / NBRC 14792 / USDA 110).